The sequence spans 265 residues: Cytochrome c oxidase subunit 3 (265 aa).

The next 6 membrane-spanning stretches (helical) occupy residues 16 to 36, 41 to 61, 84 to 104, 162 to 182, 200 to 220, and 245 to 265; these read PWPISGSLGALATTVGGVMYM, GGATLLSLGLIFLLYTMFVWW, YGSILFIVSEVMFLFAFFWAS, AVYALVATVSLALVSTGFQGM, FFLATGFHGFHVIIGTLFLIV, and WHFVDVVRLFPFVSIYWWGGI.

This sequence belongs to the cytochrome c oxidase subunit 3 family. Component of the cytochrome c oxidase (complex IV, CIV), a multisubunit enzyme composed of a catalytic core of 3 subunits and several supernumerary subunits. The complex exists as a monomer or a dimer and forms supercomplexes (SCs) in the inner mitochondrial membrane with ubiquinol-cytochrome c oxidoreductase (cytochrome b-c1 complex, complex III, CIII).

It is found in the mitochondrion inner membrane. It carries out the reaction 4 Fe(II)-[cytochrome c] + O2 + 8 H(+)(in) = 4 Fe(III)-[cytochrome c] + 2 H2O + 4 H(+)(out). Its function is as follows. Component of the cytochrome c oxidase, the last enzyme in the mitochondrial electron transport chain which drives oxidative phosphorylation. The respiratory chain contains 3 multisubunit complexes succinate dehydrogenase (complex II, CII), ubiquinol-cytochrome c oxidoreductase (cytochrome b-c1 complex, complex III, CIII) and cytochrome c oxidase (complex IV, CIV), that cooperate to transfer electrons derived from NADH and succinate to molecular oxygen, creating an electrochemical gradient over the inner membrane that drives transmembrane transport and the ATP synthase. Cytochrome c oxidase is the component of the respiratory chain that catalyzes the reduction of oxygen to water. Electrons originating from reduced cytochrome c in the intermembrane space (IMS) are transferred via the dinuclear copper A center (CU(A)) of subunit 2 and heme A of subunit 1 to the active site in subunit 1, a binuclear center (BNC) formed by heme A3 and copper B (CU(B)). The BNC reduces molecular oxygen to 2 water molecules using 4 electrons from cytochrome c in the IMS and 4 protons from the mitochondrial matrix. This chain is Cytochrome c oxidase subunit 3 (COX3), found in Aegilops columnaris (Goatgrass).